The sequence spans 303 residues: uncharacterized protein (303 aa).

This is an uncharacterized protein from Leptospira interrogans.